Here is a 256-residue protein sequence, read N- to C-terminus: Capsid protein (256 aa).

Residues 3–20 (KRPADIIISTPGSKVRRR) carry the Bipartite nuclear localization signal motif. The short motif at 40–54 (KRQSWTNRPINRKPR) is the Nuclear localization signal element. A zinc finger lies at 68–85 (CEGPCKVQSFESRHDVVH). A Nuclear export signal motif is present at residues 101-122 (LTHRVGKRFCVKSIYILGKIWM). Positions 200-247 (RRFFRVNNYVVYNQQEAGKYENHTENALMLYMACTHASNPVYATLKIR) match the Bipartite nuclear localization signal motif.

It belongs to the geminiviridae capsid protein family. Homomultimer. Binds to single-stranded and double-stranded viral DNA. Interacts (via nuclear localization signals) with host importin alpha-1a.

Its subcellular location is the virion. It is found in the host nucleus. Its function is as follows. Encapsidates the viral DNA into characteristic twinned ('geminate') particles. Binds the genomic viral ssDNA and shuttles it into and out of the cell nucleus. The CP of bipartite geminiviruses is not required for cell-to-cell or systemic movement. The chain is Capsid protein from Manihot esculenta (Cassava).